Reading from the N-terminus, the 1237-residue chain is Glutamate receptor ionotropic, NMDA 2C (1237 aa).

The N-terminal stretch at 1–19 (MGGALGPALLLTSLLGAWA) is a signal peptide. The Extracellular segment spans residues 20-554 (RLGAGQGEQA…SAFLEPYSPA (535 aa)). Residues N70 and N73 are each glycosylated (N-linked (GlcNAc...) asparagine). Cysteines 82 and 317 form a disulfide. N337 and N438 each carry an N-linked (GlcNAc...) asparagine glycan. Disulfide bonds link C426-C453 and C433-C454. L-glutamate-binding residues include S509, T511, and R516. N-linked (GlcNAc...) asparagine glycosylation is present at N539. Residues 555–575 (VWVMMFVMCLTVVAITVFMFE) form a helical membrane-spanning segment. The Cytoplasmic segment spans residues 576-601 (YFSPVSYNQNLTKGKKPGGPSFTIGK). Residues 601–620 (KSVWLLWALVFNNSVPIENP) are pore-forming. Positions 602–611 (SVWLLWALVF) form an intramembrane region, discontinuously helical. The Cytoplasmic portion of the chain corresponds to 612–622 (NNSVPIENPRG). The chain crosses the membrane as a helical span at residues 623 to 644 (TTSKIMVLVWAFFAVIFLASYT). Over 645-813 (ANLAAFMIQE…EVMSSKLDID (169 aa)) the chain is Extracellular. N-linked (GlcNAc...) asparagine glycosylation occurs at N685. Positions 687, 688, and 729 each coordinate L-glutamate. A disulfide bond links C743 and C798. Residues 814-833 (NMAGVFYMLLVAMGLALLVF) form a helical membrane-spanning segment. The Cytoplasmic portion of the chain corresponds to 834–1237 (AWEHLVYWKL…RRVSSLESEV (404 aa)). Phosphoserine is present on residues S875, S881, and S912. A compositionally biased stretch (polar residues) spans 907–925 (ADVSSSLDRATRTIENWGN). The disordered stretch occupies residues 907 to 990 (ADVSSSLDRA…LPDVSRPSCR (84 aa)). A compositionally biased stretch (low complexity) spans 930 to 941 (PAPTASGPRSST). A compositionally biased stretch (pro residues) spans 968-982 (PQPPARPATCGPPLP). The short motif at 1235-1237 (SEV) is the PDZ-binding element.

Belongs to the glutamate-gated ion channel (TC 1.A.10.1) family. NR2C/GRIN2C subfamily. In terms of assembly, heterotetramer. Forms heterotetrameric channels composed of two GluN1/zeta subunits (GRIN1), and two identical GluN2/epsilon subunits (GRIN2A, GRIN2B, GRIN2C or GRIN2D) or GluN3 subunits (GRIN3A or GRIN3B) (in vitro). In vivo, the subunit composition may depend on the expression levels of the different subunits. Interacts with PDZ domains of PATJ and DLG4. Interacts (via PDZ-binding motif) with SNX27 (via PDZ domain); the interaction is required for recycling to the plasma membrane when endocytosed and prevent degradation in lysosomes. In terms of tissue distribution, detected in cerebellum.

It localises to the cell membrane. The protein localises to the postsynaptic cell membrane. It carries out the reaction Ca(2+)(in) = Ca(2+)(out). It catalyses the reaction Na(+)(in) = Na(+)(out). The enzyme catalyses K(+)(in) = K(+)(out). Component of N-methyl-D-aspartate (NMDA) receptors (NMDARs) that function as heterotetrameric, ligand-gated cation channels with high calcium permeability and voltage-dependent block by Mg(2+). Participates in synaptic plasticity for learning and memory formation by contributing to the slow phase of excitatory postsynaptic current and long-term synaptic potentiation. Channel activation requires binding of the neurotransmitter L-glutamate to the GluN2 subunit, glycine or D-serine binding to the GluN1 subunit, plus membrane depolarization to eliminate channel inhibition by Mg(2+). NMDARs mediate simultaneously the potasium efflux and the influx of calcium and sodium. Each GluN2 subunit confers differential attributes to channel properties, including activation, deactivation and desensitization kinetics, pH sensitivity, Ca2(+) permeability, and binding to allosteric modulators. The protein is Glutamate receptor ionotropic, NMDA 2C of Rattus norvegicus (Rat).